The primary structure comprises 376 residues: 1-acyl-sn-glycerol-3-phosphate acyltransferase gamma (376 aa).

Residues 1–124 (MGLLAFLKTQ…LGSSKVLAKK (124 aa)) are Cytoplasmic-facing. An HXXXXD motif motif is present at residues 96–101 (HNFEID). The helical transmembrane segment at 125-145 (ELLYVPLIGWTWYFLEIVFCK) threads the bilayer. Topologically, residues 146–316 (RKWEEDRDTV…TLLNFLSWAT (171 aa)) are lumenal. Residues 317–339 (ILLSPLFSFVLGVFASGSPLLIL) form a helical membrane-spanning segment. The Cytoplasmic segment spans residues 340–376 (TFLGFVGAASFGVRRLIGVTEIEKGSSYGNQEFKKKE).

The protein belongs to the 1-acyl-sn-glycerol-3-phosphate acyltransferase family. Widely expressed with highest levels in testis, pancreas and kidney, followed by spleen, lung, adipose tissue and liver.

The protein localises to the endoplasmic reticulum membrane. The protein resides in the nucleus envelope. The enzyme catalyses a 1-acyl-sn-glycero-3-phosphate + an acyl-CoA = a 1,2-diacyl-sn-glycero-3-phosphate + CoA. It catalyses the reaction pentadecanoyl-CoA + 1-(9Z-octadecenoyl)-sn-glycero-3-phosphate = 1-(9Z)-octadecenoyl-2-pentadecanoyl-sn-glycero-3-phosphate + CoA. It carries out the reaction heptadecanoyl-CoA + 1-(9Z-octadecenoyl)-sn-glycero-3-phosphate = 1-(9Z)-octadecenoyl-2-heptadecanoyl-sn-glycero-3-phosphate + CoA. The catalysed reaction is 1-(9Z-octadecenoyl)-sn-glycero-3-phosphate + octadecanoyl-CoA = 1-(9Z-octadecenoyl)-2-octadecanoyl-sn-glycero-3-phosphate + CoA. The enzyme catalyses nonadecanoyl-CoA + 1-(9Z-octadecenoyl)-sn-glycero-3-phosphate = 1-(9Z)-octadecenoyl-2-nonadecanoyl-sn-glycero-3-phosphate + CoA. It catalyses the reaction 1-(9Z-octadecenoyl)-sn-glycero-3-phosphate + (5Z,8Z,11Z,14Z)-eicosatetraenoyl-CoA = 1-(9Z)-octadecenoyl-2-(5Z,8Z,11Z,14Z)-eicosatetraenoyl-sn-glycero-3-phosphate + CoA. It carries out the reaction 1-(9Z-octadecenoyl)-sn-glycero-3-phosphate + (9Z)-octadecenoyl-CoA = 1,2-di-(9Z-octadecenoyl)-sn-glycero-3-phosphate + CoA. The catalysed reaction is 1-(9Z-octadecenoyl)-sn-glycero-3-phosphate + (9Z,12Z)-octadecadienoyl-CoA = 1-(9Z)-octadecenoyl-2-(9Z,12Z)-octadecadienoyl-sn-glycero-3-phosphate + CoA. The enzyme catalyses 1-(9Z-octadecenoyl)-sn-glycero-3-phosphocholine + (5Z,8Z,11Z,14Z)-eicosatetraenoyl-CoA = 1-(9Z)-octadecenoyl-2-(5Z,8Z,11Z,14Z)-icosatetraenoyl-sn-glycero-3-phosphocholine + CoA. It catalyses the reaction 1-(9Z-octadecenoyl)-sn-glycero-3-phospho-(1D-myo-inositol) + (5Z,8Z,11Z,14Z)-eicosatetraenoyl-CoA = 1-(9Z-octadecenoyl)-2-(5Z,8Z,11Z,14Z-eicosatetraenoyl)-sn-glycero-3-phospho-1D-myo-inositol + CoA. It carries out the reaction 1-(9Z-octadecenoyl)-sn-glycero-3-phospho-L-serine + (5Z,8Z,11Z,14Z)-eicosatetraenoyl-CoA = 1-(9Z-octadecenoyl)-2-(5Z,8Z,11Z,14Z-eicosatetraenoyl)-sn-glycero-3-phospho-L-serine + CoA. The catalysed reaction is 1-hexadecanoyl-sn-glycero-3-phosphate + (9Z)-octadecenoyl-CoA = 1-hexadecanoyl-2-(9Z-octadecenoyl)-sn-glycero-3-phosphate + CoA. The enzyme catalyses 1-hexadecanoyl-sn-glycero-3-phosphate + (5Z,8Z,11Z,14Z)-eicosatetraenoyl-CoA = 1-hexadecanoyl-2-(5Z,8Z,11Z,14Z-eicosatetraenoyl)-sn-glycero-3-phosphate + CoA. It catalyses the reaction 1-heptadecanoyl-sn-glycero-3-phosphate + (5Z,8Z,11Z,14Z)-eicosatetraenoyl-CoA = 1-heptadecanoyl-2-(5Z,8Z,11Z,14Z)-eicosatetraenoyl-sn-glycero-3-phosphate + CoA. It carries out the reaction 1-octadecanoyl-sn-glycero-3-phosphate + (9Z)-octadecenoyl-CoA = 1-octadecanoyl-2-(9Z-octadecenoyl)-sn-glycero-3-phosphate + CoA. The catalysed reaction is 1-octadecanoyl-sn-glycero-3-phosphate + (5Z,8Z,11Z,14Z)-eicosatetraenoyl-CoA = 1-octadecanoyl-2-(5Z,8Z,11Z,14Z-eicosatetraenoyl)-sn-glycero-3-phosphate + CoA. The enzyme catalyses 1-(9Z-octadecenoyl)-sn-glycero-3-phosphate + hexadecanoyl-CoA = 1-hexadecanoyl-2-(9Z-octadecenoyl)-sn-glycero-3-phosphate + CoA. It catalyses the reaction 1-O-(9Z-octadecenyl)-sn-glycero-3-phosphate + (5Z,8Z,11Z,14Z)-eicosatetraenoyl-CoA = 1-O-(9Z-octadecenyl)-2-(5Z,8Z,11Z,14Z-eicosatetraenoyl)-sn-glycero-3-phosphate + CoA. It carries out the reaction a 1-acyl-sn-glycero-3-phospho-(1D-myo-inositol) + (5Z,8Z,11Z,14Z)-eicosatetraenoyl-CoA = a 1-acyl-2-(5Z,8Z,11Z,14Z-eicosatetraenoyl)-sn-glycero-3-phospho-(1D-myo-inositol) + CoA. It participates in phospholipid metabolism; CDP-diacylglycerol biosynthesis; CDP-diacylglycerol from sn-glycerol 3-phosphate: step 2/3. Its function is as follows. Converts 1-acyl-sn-glycerol-3-phosphate (lysophosphatidic acid or LPA) into 1,2-diacyl-sn-glycerol-3-phosphate (phosphatidic acid or PA) by incorporating an acyl moiety at the sn-2 position of the glycerol backbone. Acts on LPA containing saturated or unsaturated fatty acids C16:0-C20:4 at the sn-1 position using C18:1, C20:4 or C18:2-CoA as the acyl donor. Also acts on lysophosphatidylcholine, lysophosphatidylinositol and lysophosphatidylserine using C18:1 or C20:4-CoA. Has a preference for arachidonoyl-CoA as a donor. Also has a modest lysophosphatidylinositol acyltransferase (LPIAT) activity, converts lysophosphatidylinositol (LPI) into phosphatidylinositol. This is 1-acyl-sn-glycerol-3-phosphate acyltransferase gamma (AGPAT3) from Homo sapiens (Human).